A 923-amino-acid chain; its full sequence is MTIPNSDFMLENGVCDLPFTPEEEKRIVSELTSESEDNLKQGNLYFVISKRWYTSWQEYVENSANECSTGESSEAPRPGPIDNHDIIESDSDINDPQLRRLLVEGEDYVLVPKQVWKRLVEWYSGGPPIERKLICQGFYTRSYSVEVYPLCLMLTDGRDESRTVIRLGKQASIRELYEKVCAMTGVPQEKAHIWDYFDKRKNGLLDPLSYKSLEESSLHMDQDILVEVDGLSSSSQSAMSSTGNELALVPLEPSRSIVTIAGGPTLSNGHSTTSNFSLFPRITSEDDGRDSLSILGKGEKGGLAGLSNLGNTCFMNSALQCLAHTPPIVEYFLQDYSDDINRDNPLGMCGELAIAFGDLLKKLWSSGRNAVAPRAFKTKLARFAPQFSGYNQHDSQELLAFLLDGLHEDLNKVKRKPYIELKDSDSRPDDEVAEELWNYHKARNDSVIVDVCQGQYKSTLVCPVCGKISITFDPFMYLSVPLPSTLTRSMTITVFYCDGSRLPMPYTVIVPKQGSIRDLITALGTACCLAEDESLLLAEVYDHKIFRYFEIPLDSLSAIKDDEHIVAYRLNQIPKGSRKAKLEILHGGQERAVLDSVRGSDVKLFGTPFVTYVNTEPLSGTDIDAVISGFLSPLHKVHAPSKIHNGSDNGHLADATVDQASGILSSPDTEIDNASDRELSFRIFLTDERGLNIKPLQSESSISPGTVTRVLVEWNEGEHERYDSSYLSDLPEVHKTSFSAKKTRQESISLFSCLEAFLAEEPLGPDDMWFCPSCKEHRQANKKLDLWKLPDILVFHLKRFTYSRYLKNKIDTFVNFPVHDLDLSKYVKNKNGQSYLYELYAVSNHYGGLGGGHYTAYAKLIDDNKWYHFDDSHVSSVNESEIRNSAAYVLFYRRVRSETETQTAEMSTDMDYSCLNSHNDKAS.

Positions 19–134 (FTPEEEKRIV…GGPPIERKLI (116 aa)) constitute a DUSP domain. Positions 65–91 (NECSTGESSEAPRPGPIDNHDIIESDS) are disordered. The USP domain occupies 304-895 (AGLSNLGNTC…AAYVLFYRRV (592 aa)). Cys-313 serves as the catalytic Nucleophile. Catalysis depends on His-853, which acts as the Proton acceptor.

The protein belongs to the peptidase C19 family.

The enzyme catalyses Thiol-dependent hydrolysis of ester, thioester, amide, peptide and isopeptide bonds formed by the C-terminal Gly of ubiquitin (a 76-residue protein attached to proteins as an intracellular targeting signal).. Its function is as follows. Recognizes and hydrolyzes the peptide bond at the C-terminal Gly of ubiquitin. Involved in the processing of poly-ubiquitin precursors as well as that of ubiquitinated proteins. The chain is Ubiquitin carboxyl-terminal hydrolase 10 (UBP10) from Arabidopsis thaliana (Mouse-ear cress).